The primary structure comprises 395 residues: S-adenosylmethionine synthase (395 aa).

Histidine 18 is a binding site for ATP. Mg(2+) is bound at residue aspartate 20. Glutamate 46 contributes to the K(+) binding site. Residues glutamate 59 and glutamine 103 each coordinate L-methionine. Residues 103-113 (QSVDIAVGVDA) form a flexible loop region. ATP-binding positions include 170-172 (DAK), 235-236 (KF), aspartate 244, 250-251 (RK), alanine 267, and lysine 271. Aspartate 244 contacts L-methionine. Residue lysine 275 participates in L-methionine binding.

The protein belongs to the AdoMet synthase family. As to quaternary structure, homotetramer; dimer of dimers. Requires Mg(2+) as cofactor. K(+) is required as a cofactor.

It localises to the cytoplasm. The catalysed reaction is L-methionine + ATP + H2O = S-adenosyl-L-methionine + phosphate + diphosphate. It functions in the pathway amino-acid biosynthesis; S-adenosyl-L-methionine biosynthesis; S-adenosyl-L-methionine from L-methionine: step 1/1. Its function is as follows. Catalyzes the formation of S-adenosylmethionine (AdoMet) from methionine and ATP. The overall synthetic reaction is composed of two sequential steps, AdoMet formation and the subsequent tripolyphosphate hydrolysis which occurs prior to release of AdoMet from the enzyme. The sequence is that of S-adenosylmethionine synthase from Acidiphilium cryptum (strain JF-5).